Here is a 192-residue protein sequence, read N- to C-terminus: Glycerol-3-phosphate acyltransferase (192 aa).

The next 5 membrane-spanning stretches (helical) occupy residues 5 to 25, 50 to 70, 78 to 98, 112 to 132, and 153 to 173; these read VVLILSYILGSIPFSLIITRI, FLAALALFLDSFKGFIAVYIA, DFYIYVSAILAVLGHMFPIWL, ILIAFNIDITLVFVIIWIIVF, and SFFFQRNLFLTLLIIGALVFL.

This sequence belongs to the PlsY family. As to quaternary structure, probably interacts with PlsX.

Its subcellular location is the cell membrane. It catalyses the reaction an acyl phosphate + sn-glycerol 3-phosphate = a 1-acyl-sn-glycero-3-phosphate + phosphate. It participates in lipid metabolism; phospholipid metabolism. Its function is as follows. Catalyzes the transfer of an acyl group from acyl-phosphate (acyl-PO(4)) to glycerol-3-phosphate (G3P) to form lysophosphatidic acid (LPA). This enzyme utilizes acyl-phosphate as fatty acyl donor, but not acyl-CoA or acyl-ACP. The protein is Glycerol-3-phosphate acyltransferase of Wolbachia pipientis wMel.